We begin with the raw amino-acid sequence, 411 residues long: Serine hydroxymethyltransferase (411 aa).

Residues Leu119 and 123 to 125 (GHL) contribute to the (6S)-5,6,7,8-tetrahydrofolate site. Lys228 is subject to N6-(pyridoxal phosphate)lysine. 351 to 353 (SPF) contributes to the (6S)-5,6,7,8-tetrahydrofolate binding site.

The protein belongs to the SHMT family. As to quaternary structure, homodimer. Pyridoxal 5'-phosphate serves as cofactor.

The protein resides in the cytoplasm. The catalysed reaction is (6R)-5,10-methylene-5,6,7,8-tetrahydrofolate + glycine + H2O = (6S)-5,6,7,8-tetrahydrofolate + L-serine. The protein operates within one-carbon metabolism; tetrahydrofolate interconversion. Its pathway is amino-acid biosynthesis; glycine biosynthesis; glycine from L-serine: step 1/1. Its function is as follows. Catalyzes the reversible interconversion of serine and glycine with tetrahydrofolate (THF) serving as the one-carbon carrier. This reaction serves as the major source of one-carbon groups required for the biosynthesis of purines, thymidylate, methionine, and other important biomolecules. Also exhibits THF-independent aldolase activity toward beta-hydroxyamino acids, producing glycine and aldehydes, via a retro-aldol mechanism. The chain is Serine hydroxymethyltransferase from Clostridium botulinum (strain Alaska E43 / Type E3).